We begin with the raw amino-acid sequence, 241 residues long: Small ribosomal subunit protein uS2 (241 aa).

The protein belongs to the universal ribosomal protein uS2 family.

The chain is Small ribosomal subunit protein uS2 from Yersinia enterocolitica serotype O:8 / biotype 1B (strain NCTC 13174 / 8081).